The primary structure comprises 741 residues: Phosphoribosylformylglycinamidine synthase subunit PurL (741 aa).

The active site involves His53. ATP is bound by residues Tyr56 and Lys95. Residue Glu97 coordinates Mg(2+). Substrate contacts are provided by residues 98 to 101 and Arg120; that span reads SHNH. The Proton acceptor role is filled by His99. Asp121 lines the Mg(2+) pocket. Gln244 provides a ligand contact to substrate. A Mg(2+)-binding site is contributed by Asp274. Position 318–320 (318–320) interacts with substrate; it reads ESQ. ATP contacts are provided by Asp501 and Gly538. Residue Asn539 participates in Mg(2+) binding. Ser541 is a binding site for substrate.

This sequence belongs to the FGAMS family. In terms of assembly, monomer. Part of the FGAM synthase complex composed of 1 PurL, 1 PurQ and 2 PurS subunits.

The protein localises to the cytoplasm. It catalyses the reaction N(2)-formyl-N(1)-(5-phospho-beta-D-ribosyl)glycinamide + L-glutamine + ATP + H2O = 2-formamido-N(1)-(5-O-phospho-beta-D-ribosyl)acetamidine + L-glutamate + ADP + phosphate + H(+). The protein operates within purine metabolism; IMP biosynthesis via de novo pathway; 5-amino-1-(5-phospho-D-ribosyl)imidazole from N(2)-formyl-N(1)-(5-phospho-D-ribosyl)glycinamide: step 1/2. Its function is as follows. Part of the phosphoribosylformylglycinamidine synthase complex involved in the purines biosynthetic pathway. Catalyzes the ATP-dependent conversion of formylglycinamide ribonucleotide (FGAR) and glutamine to yield formylglycinamidine ribonucleotide (FGAM) and glutamate. The FGAM synthase complex is composed of three subunits. PurQ produces an ammonia molecule by converting glutamine to glutamate. PurL transfers the ammonia molecule to FGAR to form FGAM in an ATP-dependent manner. PurS interacts with PurQ and PurL and is thought to assist in the transfer of the ammonia molecule from PurQ to PurL. This is Phosphoribosylformylglycinamidine synthase subunit PurL from Latilactobacillus sakei subsp. sakei (strain 23K) (Lactobacillus sakei subsp. sakei).